Reading from the N-terminus, the 500-residue chain is Protein DETOXIFICATION 29 (500 aa).

12 helical membrane passes run 67-87 (GAITQVFAGHISTIALAAVSV), 91-111 (VVAGFSFGIMLGMGSALETLC), 132-152 (VILNVTALILSLLYIFAAPIL), 161-181 (ISSAAGIFSIYMIPQIFAYAI), 197-217 (VMAVISAVALVIHVPLTWFVI), 227-247 (LAVVLNASWCFIDMAQLVYIF), 277-297 (AVMLCLEVWYFMAIILFAGYL), 302-322 (ISVAALSICMNILGWTAMIAI), 349-369 (LVAVITSTLIGFIVSMILLIF), 393-413 (ILALSIVINNVQPVLSGVAVG), 419-439 (VVAYVNIACYYVFGIPFGLLL), and 449-469 (GIWCGMLTGTVVQTIVLTWMI).

Belongs to the multi antimicrobial extrusion (MATE) (TC 2.A.66.1) family.

It localises to the vacuole membrane. This chain is Protein DETOXIFICATION 29, found in Arabidopsis thaliana (Mouse-ear cress).